Consider the following 306-residue polypeptide: Small ribosomal subunit protein uS2 (306 aa).

The span at 229–238 (GEESAAEERP) shows a compositional bias: basic and acidic residues. Positions 229-306 (GEESAAEERP…VGEGDESEER (78 aa)) are disordered. Residues 261–287 (QPGEPEAEAFEEAAGEPEDSTEEEAAE) are compositionally biased toward acidic residues.

This sequence belongs to the universal ribosomal protein uS2 family.

The protein is Small ribosomal subunit protein uS2 of Rubrobacter xylanophilus (strain DSM 9941 / JCM 11954 / NBRC 16129 / PRD-1).